The sequence spans 970 residues: MATCIGEKIEDFKVGNLLGKGSFAGVYRAESIHTGLEVAIKMIDKKAMYKAGMVQRVQNEVKIHCQLKHPSILELYNYFEDSNYVYLVLEMCHNGEMNRYLKNRVKPFSENEARHFMHQIITGMLYLHSHGILHRDLTLSNLLLTRNMNIKIADFGLATQLKMPHEKHYTLCGTPNYISPEIATRSAHGLESDVWSLGCMFYTLLIGRPPFDTDTVKNTLNKVVLADYEMPSFLSIEAKDLIHQLLRRNPADRLSLSSVLDHPFMSRNSSTKSKDLGTVEDSIDSGHATISTAITASSSTSISGSLFDKRRLLIGQPLPNKMTVFPKNKSSTDFSSSGDGNSFYTQWGNQETSNSGRGRVIQDAEERPHSRYLRRAYSSDRSGTSNSQSQAKTYTMERCHSAEMLSVSKRSGGGENEERYSPTDNNANIFNFFKEKTSSSSGSFERPDNNQALSNHLCPGKTPFPFADPTPQTETVQQWFGNLQINAHLRKTTEYDSISPNRDFQGHPDLQKDTSKNAWTDTKVKKNSDASDNAHSVKQQNTMKYMTALHSKPEIIQQECVFGSDPLSEQSKTRGMEPPWGYQNRTLRSITSPLVAHRLKPIRQKTKKAVVSILDSEEVCVELVKEYASQEYVKEVLQISSDGNTITIYYPNGGRGFPLADRPPSPTDNISRYSFDNLPEKYWRKYQYASRFVQLVRSKSPKITYFTRYAKCILMENSPGADFEVWFYDGVKIHKTEDFIQVIEKTGKSYTLKSESEVNSLKEEIKMYMDHANEGHRICLALESIISEEERKTRSAPFFPIIIGRKPGSTSSPKALSPPPSVDSNYPTRERASFNRMVMHSAASPTQAPILNPSMVTNEGLGLTTTASGTDISSNSLKDCLPKSAQLLKSVFVKNVGWATQLTSGAVWVQFNDGSQLVVQAGVSSISYTSPNGQTTRYGENEKLPDYIKQKLQCLSSILLMFSNPTPNFH.

The region spanning 12–265 (FKVGNLLGKG…LSSVLDHPFM (254 aa)) is the Protein kinase domain. Residues 18–26 (LGKGSFAGV) and Lys-41 each bind ATP. Residues Lys-45 and Lys-46 each carry the N6-acetyllysine modification. The active-site Proton acceptor is Asp-136. Disordered regions lie at residues 323 to 458 (TVFP…NHLC) and 497 to 538 (SISP…HSVK). The span at 328–356 (NKSSTDFSSSGDGNSFYTQWGNQETSNSG) shows a compositional bias: polar residues. Residues 360–369 (VIQDAEERPH) show a composition bias toward basic and acidic residues. Residues 379–393 (SDRSGTSNSQSQAKT) are compositionally biased toward polar residues. Phosphoserine is present on Ser-401. The segment covering 438–454 (SSSSGSFERPDNNQALS) has biased composition (polar residues). The span at 504-515 (FQGHPDLQKDTS) shows a compositional bias: basic and acidic residues. One can recognise a Cryptic POLO box 1 (CPB1) domain in the interval 586-699 (TLRSITSPLV…SRFVQLVRSK (114 aa)). Ser-665 is subject to Phosphoserine. Residues 700–813 (SPKITYFTRY…GRKPGSTSSP (114 aa)) enclose the Cryptic POLO box 2 (CPB2) domain. Positions 808–828 (GSTSSPKALSPPPSVDSNYPT) are disordered. Residue Ser-817 is modified to Phosphoserine. In terms of domain architecture, POLO box spans 886 to 964 (QLLKSVFVKN…LSSILLMFSN (79 aa)).

It belongs to the protein kinase superfamily. Ser/Thr protein kinase family. CDC5/Polo subfamily. In terms of assembly, homodimer. Interacts with CEP152 (via N-terminus). Interacts with CEP78; this interaction may be important for proper PLK4 localization to the centriole and PLK4-induced overduplication of centrioles. Interacts with CEP131. Interacts simultaneously with TENT5C and CEP192. Interacts with TENT5C; this interaction leads to the TENT5C recruitment in the centrosome. Interacts with CEP85; this interaction may be important in cell migration and centriole assembly. Acetylation by KAT2A and KAT2B impairs kinase activity by shifting the kinase to an inactive conformation. Post-translationally, ubiquitinated; leading to its degradation by the proteasome. Deubiquitinated by USP54; leading to PLK4 stabilization. In terms of processing, tyrosine-phosphorylated by TEC.

The protein localises to the cytoplasm. It localises to the cytoskeleton. The protein resides in the microtubule organizing center. Its subcellular location is the centrosome. It is found in the centriole. The protein localises to the nucleus. It localises to the nucleolus. The protein resides in the cleavage furrow. It catalyses the reaction L-seryl-[protein] + ATP = O-phospho-L-seryl-[protein] + ADP + H(+). It carries out the reaction L-threonyl-[protein] + ATP = O-phospho-L-threonyl-[protein] + ADP + H(+). Serine/threonine-protein kinase that plays a central role in centriole duplication. Able to trigger procentriole formation on the surface of the parental centriole cylinder, leading to the recruitment of centriole biogenesis proteins such as SASS6, CPAP, CCP110, CEP135 and gamma-tubulin. When overexpressed, it is able to induce centrosome amplification through the simultaneous generation of multiple procentrioles adjoining each parental centriole during S phase. Phosphorylates 'Ser-151' of FBXW5 during the G1/S transition, leading to inhibit FBXW5 ability to ubiquitinate SASS6. Its central role in centriole replication suggests a possible role in tumorigenesis, centrosome aberrations being frequently observed in tumors. Also involved in deuterosome-mediated centriole amplification in multiciliated that can generate more than 100 centrioles. Also involved in trophoblast differentiation by phosphorylating HAND1, leading to disrupt the interaction between HAND1 and MDFIC and activate HAND1. Phosphorylates CDC25C and CHEK2. Required for the recruitment of STIL to the centriole and for STIL-mediated centriole amplification. Phosphorylates CEP131 at 'Ser-78' and PCM1 at 'Ser-372' which is essential for proper organization and integrity of centriolar satellites. This Homo sapiens (Human) protein is Serine/threonine-protein kinase PLK4.